The following is a 122-amino-acid chain: MIQTESRLDVADNTGAKSVLCIKVLGGSKRRYASVGDIIKVSVKEAAPRGRVKKGEVYSAVVVRTAKGIRRGDGSLVKFDGNAAVLLNSKLEPIGTRIFGPVTRELRTERFMKIVSLAPEVL.

The protein belongs to the universal ribosomal protein uL14 family. Part of the 50S ribosomal subunit. Forms a cluster with proteins L3 and L19. In the 70S ribosome, L14 and L19 interact and together make contacts with the 16S rRNA in bridges B5 and B8.

Binds to 23S rRNA. Forms part of two intersubunit bridges in the 70S ribosome. This Acidovorax sp. (strain JS42) protein is Large ribosomal subunit protein uL14.